Consider the following 58-residue polypeptide: Large ribosomal subunit protein bL32 (58 aa).

The segment covering 1 to 15 (MAVPKKKTSKAKRNQ) has biased composition (basic residues). Positions 1–23 (MAVPKKKTSKAKRNQRSATWKGK) are disordered.

The protein belongs to the bacterial ribosomal protein bL32 family.

The protein is Large ribosomal subunit protein bL32 of Synechococcus sp. (strain CC9902).